The chain runs to 509 residues: MVLWILWRPFGFSGRFLKLESHSITESKSLIPVAWTSLTQMLLEAPGIFLLGQRKRFSTMPETETHERETELFSPPSDVRGMTKLDRTAFKKTVNIPVLKVRKEIVSKLMRSLKRAALQRPGIRRVIEDPEDKESRLIMLDPYKIFTHDSFEKAELSVLEQLNVSPQISKYNLELTYEHFKSEEILRAVLPEGQDVTSGFSRIGHIAHLNLRDHQLPFKHLIGQVMIDKNPGITSAVNKINNIDNMYRNFQMEVLSGEQNMMTKVRENNYTYEFDFSKVYWNPRLSTEHSRITELLKPGDVLFDVFAGVGPFAIPVAKKNCTVFANDLNPESHKWLLYNCKLNKVDQKVKVFNLDGKDFLQGPVKEELMQLLGLSKERKPSVHVVMNLPAKAIEFLSAFKWLLDGQPCSSEFLPIVHCYSFSKDANPAEDVRQRAGAVLGISLEACSSVHLVRNVAPNKEMLCITFQIPASVLYKNQTRNPENHEDPPLKRQRTAEAFSDEKTQIVSNT.

Residues histidine 289, 327–328, 355–356, and asparagine 387 contribute to the S-adenosyl-L-methionine site; these read DL and DG. The segment at 478-509 is disordered; it reads TRNPENHEDPPLKRQRTAEAFSDEKTQIVSNT.

It belongs to the class I-like SAM-binding methyltransferase superfamily. TRM5/TYW2 family. Monomer.

The protein resides in the mitochondrion matrix. The protein localises to the nucleus. It localises to the cytoplasm. It catalyses the reaction guanosine(37) in tRNA + S-adenosyl-L-methionine = N(1)-methylguanosine(37) in tRNA + S-adenosyl-L-homocysteine + H(+). In terms of biological role, involved in mitochondrial tRNA methylation. Specifically methylates the N1 position of guanosine-37 in various tRNAs. Methylation is not dependent on the nature of the nucleoside 5' of the target nucleoside. This is the first step in the biosynthesis of wybutosine (yW), a modified base adjacent to the anticodon of tRNAs and required for accurate decoding. The protein is tRNA (guanine(37)-N(1))-methyltransferase of Homo sapiens (Human).